The primary structure comprises 324 residues: MTASELVAGDLAGGRAPGALPLDTTWHRPGWTIGELEAAKAGRTISVVLPALNEEATIESVIDSISPLVDGLVDELIVLDSGSTDDTEIRAIASGARVVSREQALPEVPVRPGKGEALWRSLAATSGDIVVFIDSDLINPHPLFVPWLVGPLLTGEGIQLVKSFYRRPLQVSDVTSGVCATGGGRVTELVARPLLAALRPELGCVLQPLSGEYAASRELLTSLPFAPGYGVEIGLLIDTFDRLGLDAIAQVNLGVRAHRNRPLDELGAMSRQVIATLLSRCGIPDSGVGLTQFLPGGPDDSDYTRHTWPVSLVDRPPMKVMRPR.

UDP-alpha-D-glucose-binding positions include 50–54 (PALNE), Ser81, Lys114, and 134–135 (DS). Residue Asp136 participates in Mn(2+) binding. Residue 184–187 (GRVT) participates in (2R)-3-phosphoglycerate binding. Residues 229 to 232 (YGVE) and 256 to 261 (RAHRNR) contribute to the UDP-alpha-D-glucose site. A Mn(2+)-binding site is contributed by His258. Asn260 is a (2R)-3-phosphoglycerate binding site.

The protein belongs to the glycosyltransferase 2 family. In terms of assembly, homotrimer. Mg(2+) serves as cofactor. Requires Mn(2+) as cofactor.

The enzyme catalyses an NDP-alpha-D-glucose + (2R)-3-phosphoglycerate = (2R)-2-O-(alpha-D-glucopyranosyl)-3-phospho-glycerate + a ribonucleoside 5'-diphosphate + H(+). It carries out the reaction (2R)-3-phosphoglycerate + UDP-alpha-D-glucose = (2R)-2-O-(alpha-D-glucopyranosyl)-3-phospho-glycerate + UDP + H(+). The catalysed reaction is ADP-alpha-D-glucose + (2R)-3-phosphoglycerate = (2R)-2-O-(alpha-D-glucopyranosyl)-3-phospho-glycerate + ADP + H(+). It catalyses the reaction GDP-D-glucose + (2R)-3-phosphoglycerate = (2R)-2-O-(alpha-D-glucopyranosyl)-3-phospho-glycerate + GDP + H(+). Involved in the biosynthesis of 6-O-methylglucose lipopolysaccarides (MGLPs). Catalyzes the transfer of the glucose moiety from a nuleotide sugar such as UDP-alpha-D-glucose to the position 2 of 3-phospho-D-glycerate (3-PGA) to form glucosyl-3-phosphoglycerate (GPG). It can use UDP-glucose, ADP-glucose and GDP-glucose as sugar donor substrates with decreasing affinity and with 3-PGA as an acceptor. D-glycerate can only be an acceptor with ADP-glucose and at a very low rate. In Mycobacterium bovis (strain ATCC BAA-935 / AF2122/97), this protein is Glucosyl-3-phosphoglycerate synthase (gpgS).